Consider the following 487-residue polypeptide: Probable aspartic-type endopeptidase opsB (487 aa).

Residues 1-20 (MQKSWLVLLVACLGLQGTTA) form the signal peptide. A Peptidase A1 domain is found at 69 to 398 (YFCNITLGTP…DLSNNEISLA (330 aa)). Residue Asn72 is glycosylated (N-linked (GlcNAc...) asparagine). Asp87 is a catalytic residue. Residues Asn99, Asn111, Asn132, and Asn272 are each glycosylated (N-linked (GlcNAc...) asparagine). Asp286 is a catalytic residue. Residues Asn329 and Asn403 are each glycosylated (N-linked (GlcNAc...) asparagine). Ala463 carries the GPI-anchor amidated alanine lipid modification. The propeptide at 464–487 (PAGPTDVPKHLVLGAAAIGYVLAF) is removed in mature form.

Belongs to the peptidase A1 family.

The protein localises to the cell membrane. In terms of biological role, probable GPI-anchored aspartic-type endopeptidase. This is Probable aspartic-type endopeptidase opsB (opsB) from Aspergillus oryzae (strain ATCC 42149 / RIB 40) (Yellow koji mold).